We begin with the raw amino-acid sequence, 415 residues long: Adenosylhomocysteinase (415 aa).

Substrate-binding residues include T53, D124, and E147. An NAD(+)-binding site is contributed by 148–150; the sequence is TTT. Residues K177 and D181 each contribute to the substrate site. NAD(+) contacts are provided by residues N182, 211-216, E234, N269, 290-292, and N337; these read GYGWVG and SGH.

It belongs to the adenosylhomocysteinase family. The cofactor is NAD(+).

The protein localises to the cytoplasm. The enzyme catalyses S-adenosyl-L-homocysteine + H2O = L-homocysteine + adenosine. Its pathway is amino-acid biosynthesis; L-homocysteine biosynthesis; L-homocysteine from S-adenosyl-L-homocysteine: step 1/1. May play a key role in the regulation of the intracellular concentration of adenosylhomocysteine. The sequence is that of Adenosylhomocysteinase from Sulfurisphaera tokodaii (strain DSM 16993 / JCM 10545 / NBRC 100140 / 7) (Sulfolobus tokodaii).